The primary structure comprises 356 residues: MGVLCFGASNILLCAEDSSSVLGLGGFGGGGGEVAAELGCGGGGGFDFFGFGGGAVFPIDSDEFVALLVEKEMDHQPQRGYLEKLELGGLECSWRKDAIDWICKVHSYYNFGPLSLYLAVNYLDRFLSSFNLPHDESWMQQLLSVSCLSLATKMEETVVPLPMDLQVFDAEYVFEARHIKRMELIVMKTLKWRLQAVTPFSFIGYFLDKFNEGKPPSYTLASWCSDLTVGTLKDSRFLSFRPSEIAAAVVLAVLAENQFLVFNSALGESEIPVNKEMVMRCYELMVEKALVKKIRNSNASSSVPHSPITVLDAACFSFRSDDTTLGSSQSNSNNKDYNSQDSAPASKRRRLNTTPI.

The segment covering 325 to 343 (LGSSQSNSNNKDYNSQDSA) has biased composition (polar residues). The tract at residues 325-356 (LGSSQSNSNNKDYNSQDSAPASKRRRLNTTPI) is disordered. Basic residues predominate over residues 346–356 (SKRRRLNTTPI).

This sequence belongs to the cyclin family. Cyclin D subfamily.

The sequence is that of Cyclin-D2-2 (CYCD2-2) from Oryza sativa subsp. japonica (Rice).